Consider the following 287-residue polypeptide: D-apionate oxidoisomerase (287 aa).

Residues 13 to 15 (GKM), Glu36, and Asp71 contribute to the NAD(+) site. Zn(2+) contacts are provided by His116 and Glu186.

This sequence belongs to the ApnO family. Requires Zn(2+) as cofactor.

The catalysed reaction is D-apionate + NAD(+) = 3-oxoisoapionate + NADH + H(+). Its pathway is carbohydrate metabolism. Involved in catabolism of D-apiose. Catalyzes the conversion of D-apionate to 3-oxo-isoapionate. In Blautia hydrogenotrophica (strain DSM 10507 / JCM 14656 / S5a33) (Ruminococcus hydrogenotrophicus), this protein is D-apionate oxidoisomerase.